The sequence spans 223 residues: Phosphoribosylformylglycinamidine synthase subunit PurQ (223 aa).

A Glutamine amidotransferase type-1 domain is found at 3–223 (SAVVQLPGLN…FASALDVVAA (221 aa)). Cysteine 86 (nucleophile) is an active-site residue. Catalysis depends on residues histidine 196 and glutamate 198.

Part of the FGAM synthase complex composed of 1 PurL, 1 PurQ and 2 PurS subunits.

Its subcellular location is the cytoplasm. It carries out the reaction N(2)-formyl-N(1)-(5-phospho-beta-D-ribosyl)glycinamide + L-glutamine + ATP + H2O = 2-formamido-N(1)-(5-O-phospho-beta-D-ribosyl)acetamidine + L-glutamate + ADP + phosphate + H(+). The enzyme catalyses L-glutamine + H2O = L-glutamate + NH4(+). It functions in the pathway purine metabolism; IMP biosynthesis via de novo pathway; 5-amino-1-(5-phospho-D-ribosyl)imidazole from N(2)-formyl-N(1)-(5-phospho-D-ribosyl)glycinamide: step 1/2. Part of the phosphoribosylformylglycinamidine synthase complex involved in the purines biosynthetic pathway. Catalyzes the ATP-dependent conversion of formylglycinamide ribonucleotide (FGAR) and glutamine to yield formylglycinamidine ribonucleotide (FGAM) and glutamate. The FGAM synthase complex is composed of three subunits. PurQ produces an ammonia molecule by converting glutamine to glutamate. PurL transfers the ammonia molecule to FGAR to form FGAM in an ATP-dependent manner. PurS interacts with PurQ and PurL and is thought to assist in the transfer of the ammonia molecule from PurQ to PurL. In Rhizobium etli (strain ATCC 51251 / DSM 11541 / JCM 21823 / NBRC 15573 / CFN 42), this protein is Phosphoribosylformylglycinamidine synthase subunit PurQ.